A 136-amino-acid chain; its full sequence is Large ribosomal subunit protein uL16 (136 aa).

This sequence belongs to the universal ribosomal protein uL16 family. In terms of assembly, part of the 50S ribosomal subunit.

Binds 23S rRNA and is also seen to make contacts with the A and possibly P site tRNAs. The protein is Large ribosomal subunit protein uL16 of Mannheimia succiniciproducens (strain KCTC 0769BP / MBEL55E).